We begin with the raw amino-acid sequence, 455 residues long: Epoxide hydrolase 1 (455 aa).

The chain crosses the membrane as a helical; Signal-anchor for type III membrane protein span at residues 1–21 (MWLELILASVLGFVIYWFVSR). At 22 to 455 (DKEETLPLED…RKFVSLAELQ (434 aa)) the chain is on the cytoplasmic side. Asp-226 (nucleophile) is an active-site residue. Position 295 is a dimethylated arginine (Arg-295). The active-site Proton donor is the Tyr-374. His-431 (proton acceptor) is an active-site residue. Lys-439 carries the post-translational modification N6-acetyllysine.

Belongs to the peptidase S33 family.

It is found in the microsome membrane. The protein resides in the endoplasmic reticulum membrane. It catalyses the reaction cis-stilbene oxide + H2O = (1R,2R)-hydrobenzoin. The enzyme catalyses 1-(4-methoxyphenyl)-N-methyl-N-[(3-methyloxetan-3-yl)methyl]methanamine + H2O = 2-{[(4-methoxybenzyl)(methyl)amino]methyl}-2-methylpropane-1,3-diol. The catalysed reaction is 8,9-epoxy-(5Z,11Z,14Z)-eicosatrienoate + H2O = 8,9-dihydroxy-(5Z,11Z,14Z)-eicosatrienoate. It carries out the reaction 11,12-epoxy-(5Z,8Z,14Z)-eicosatrienoate + H2O = 11,12-dihydroxy-(5Z,8Z,14Z)-eicosatrienoate. It catalyses the reaction 2-(5Z,8Z,11Z,14Z-eicosatetraenoyl)-glycerol + H2O = glycerol + (5Z,8Z,11Z,14Z)-eicosatetraenoate + H(+). Inhibited by 10-hydroxystearamide and methoxy-arachidonyl fluorophosphate. Its function is as follows. Biotransformation enzyme that catalyzes the hydrolysis of arene and aliphatic epoxides to less reactive and more water soluble dihydrodiols by the trans addition of water. May play a role in the metabolism of endogenous lipids such as epoxide-containing fatty acids. Metabolizes the abundant endocannabinoid 2-arachidonoylglycerol (2-AG) to free arachidonic acid (AA) and glycerol. Binds 20(S)-hydroxycholesterol (20(S)-OHC). The protein is Epoxide hydrolase 1 of Mus musculus (Mouse).